We begin with the raw amino-acid sequence, 600 residues long: Polypeptide N-acetylgalactosaminyltransferase (600 aa).

At 1 to 7 the chain is on the cytoplasmic side; that stretch reads MVRRKLR. Residues 8 to 28 traverse the membrane as a helical; Signal-anchor for type II membrane protein segment; sequence LLVILAGIWLVGIVVYLFKGD. Topologically, residues 29–600 are lumenal; the sequence is DQSEFEKRVI…KWTFSLSKNR (572 aa). Intrachain disulfides connect C154/C382, C373/C451, C484/C501, C524/C541, and C567/C583. Residues 163–268 form a catalytic subdomain A region; sequence LPDTSVIITF…EKWLEPLLDR (106 aa). Residues T171, D204, and R229 each coordinate substrate. Position 252 (D252) interacts with Mn(2+). S253 contributes to the substrate binding site. A Mn(2+)-binding site is contributed by H254. The tract at residues 328 to 390 is catalytic subdomain B; the sequence is PIRTPMIAGG…PCSRVGHVFR (63 aa). W359 provides a ligand contact to substrate. Mn(2+) is bound at residue H387. Residues R390, H393, and Y395 each contribute to the substrate site. The Ricin B-type lectin domain maps to 466–595; the sequence is KIPSVQDIAF…SSYTQKWTFS (130 aa).

This sequence belongs to the glycosyltransferase 2 family. GalNAc-T subfamily. The cofactor is Mn(2+). Post-translationally, O-glycosylated.

It localises to the golgi apparatus membrane. The enzyme catalyses L-seryl-[protein] + UDP-N-acetyl-alpha-D-galactosamine = a 3-O-[N-acetyl-alpha-D-galactosaminyl]-L-seryl-[protein] + UDP + H(+). The catalysed reaction is L-threonyl-[protein] + UDP-N-acetyl-alpha-D-galactosamine = a 3-O-[N-acetyl-alpha-D-galactosaminyl]-L-threonyl-[protein] + UDP + H(+). It participates in protein modification; protein glycosylation. Its activity is regulated as follows. No change in activity by addition of up to 10% methanol or glycerol, or 5% acetonitrile. 40% reduction in activity by 10% acetonitrile or by lyophilization. Activity requires divalent cations, the best being Mn(2+) (10-20 mM), followed by Co(2+), Mg(2+) and Ca(2+). Loss of activity with Cu(2+) or in the presence of EDTA. Inhibited by UDP, but not by UMP, UTP, ADP or GDP nucleotides. No inhibition by galactose, N-acetylglucosamine or N-acetylgalactosamine sugars. Its function is as follows. Catalyzes the initial reaction in O-linked oligosaccharide biosynthesis, the transfer of an N-acetyl-D-galactosamine residue to a serine or threonine residue on the protein receptor. Has a broad substrate specificity. Acceptor peptides include Muc2, Muc5Ac, Muc1a and Muc1a', with Muc2 as the best acceptor. Acts on non-glycosylated and mono- or multi-glycosylated peptide substrates. Transfers preferably to threonine rather than serine residue. Thr-15 is the most preferred site of glycosylation in Muc2 peptide PTTTPITTTTTVTPTPTPTGTQTK having proline residues at position -1, and at positions +1 and +3, where the number represents the distance from the C-terminal and N-terminal hydroxyl amino acid, respectively. Transfer of the N-acetyl-D-galactosamine (GalNAc) is optimal with proline residues at positions -3, -1, +1 and +3, but other amino acids are tolerated, although some, such as phenylalanine, isoleucine or leucine at -1, or lysine at +3 prevent the transfer completely. Second GalNAc is transferred to Muc2 Thr-2 or Thr-13, both of which have two proline residues nearby. Up to nine sites can be glycosylated within Muc2, but eight are used simultaneously since Thr-19 and Thr-21 are not detected to be glycosylated at the same time. Glycosylation is not detected of a potential site, which is next to an already glycosylated site, but only one amino acid is needed in between two glycosylation sites. Ser-5 is the preferred glycosylation site in Muc5Ac peptide GTTPSPVPTTSTTSAP into which up to four GalNAcs can be attached. Only the threonine residues are detected as pontential glycosylation sites in Muc1a APPAHGVTSAPDTRPAPGC and Muc1a' AHGVTSAPDTR peptides. Transferase activity is restricted to UDP-GalNAc as a donor, and none of the nucleotide sugars UDP-Gal, UDP-GlcNAc, GDP-fucose, UDP-xylose, UDP-glucuronic acid or CMP-neuraminic acid are utilized as donors. This is Polypeptide N-acetylgalactosaminyltransferase from Biomphalaria glabrata (Bloodfluke planorb).